The following is a 101-amino-acid chain: Small ribosomal subunit protein bS6 (101 aa).

Belongs to the bacterial ribosomal protein bS6 family.

In terms of biological role, binds together with bS18 to 16S ribosomal RNA. In Nitratidesulfovibrio vulgaris (strain DSM 19637 / Miyazaki F) (Desulfovibrio vulgaris), this protein is Small ribosomal subunit protein bS6.